A 445-amino-acid chain; its full sequence is Tubulin beta chain (445 aa).

The MREI motif signature appears at 1-4; the sequence is MREI. The GTP site is built by Gln-11, Glu-69, Ser-138, Gly-142, Thr-143, Gly-144, Asn-204, and Asn-226. Glu-69 is a binding site for Mg(2+). A disordered region spans residues 421 to 445; it reads EYQQYQDATAEEEGEGEEEGDEEVA. The span at 429–445 shows a compositional bias: acidic residues; it reads TAEEEGEGEEEGDEEVA. Position 438 is a 5-glutamyl polyglutamate (Glu-438).

This sequence belongs to the tubulin family. As to quaternary structure, dimer of alpha and beta chains. A typical microtubule is a hollow water-filled tube with an outer diameter of 25 nm and an inner diameter of 15 nM. Alpha-beta heterodimers associate head-to-tail to form protofilaments running lengthwise along the microtubule wall with the beta-tubulin subunit facing the microtubule plus end conferring a structural polarity. Microtubules usually have 13 protofilaments but different protofilament numbers can be found in some organisms and specialized cells. Mg(2+) is required as a cofactor. Post-translationally, some glutamate residues at the C-terminus are polyglycylated, resulting in polyglycine chains on the gamma-carboxyl group. Glycylation is mainly limited to tubulin incorporated into axonemes (cilia and flagella) whereas glutamylation is prevalent in neuronal cells, centrioles, axonemes, and the mitotic spindle. Both modifications can coexist on the same protein on adjacent residues, and lowering polyglycylation levels increases polyglutamylation, and reciprocally. The precise function of polyglycylation is still unclear. In terms of processing, some glutamate residues at the C-terminus are polyglutamylated, resulting in polyglutamate chains on the gamma-carboxyl group. Polyglutamylation plays a key role in microtubule severing by spastin (SPAST). SPAST preferentially recognizes and acts on microtubules decorated with short polyglutamate tails: severing activity by SPAST increases as the number of glutamates per tubulin rises from one to eight, but decreases beyond this glutamylation threshold. In terms of tissue distribution, brain.

The protein resides in the cytoplasm. The protein localises to the cytoskeleton. Functionally, tubulin is the major constituent of microtubules, a cylinder consisting of laterally associated linear protofilaments composed of alpha- and beta-tubulin heterodimers. Microtubules grow by the addition of GTP-tubulin dimers to the microtubule end, where a stabilizing cap forms. Below the cap, tubulin dimers are in GDP-bound state, owing to GTPase activity of alpha-tubulin. The polypeptide is Tubulin beta chain (Pseudopleuronectes americanus (Winter flounder)).